Here is a 941-residue protein sequence, read N- to C-terminus: Glycine dehydrogenase (decarboxylating) (941 aa).

The residue at position 692 (K692) is an N6-(pyridoxal phosphate)lysine.

Belongs to the GcvP family. As to quaternary structure, the glycine cleavage system is composed of four proteins: P, T, L and H. Pyridoxal 5'-phosphate serves as cofactor.

The catalysed reaction is N(6)-[(R)-lipoyl]-L-lysyl-[glycine-cleavage complex H protein] + glycine + H(+) = N(6)-[(R)-S(8)-aminomethyldihydrolipoyl]-L-lysyl-[glycine-cleavage complex H protein] + CO2. Its function is as follows. The glycine cleavage system catalyzes the degradation of glycine. The P protein binds the alpha-amino group of glycine through its pyridoxal phosphate cofactor; CO(2) is released and the remaining methylamine moiety is then transferred to the lipoamide cofactor of the H protein. In Mycobacterium avium (strain 104), this protein is Glycine dehydrogenase (decarboxylating).